The chain runs to 119 residues: V-type proton ATPase subunit F (119 aa).

It belongs to the V-ATPase F subunit family. V-ATPase is a heteromultimeric enzyme composed of a peripheral catalytic V1 complex (components A to H) attached to an integral membrane V0 proton pore complex (components: a, c, c', c'', d, e, f and VOA1).

Its subcellular location is the vacuole membrane. Subunit of the V1 complex of vacuolar(H+)-ATPase (V-ATPase), a multisubunit enzyme composed of a peripheral complex (V1) that hydrolyzes ATP and a membrane integral complex (V0) that translocates protons. V-ATPase is responsible for acidifying and maintaining the pH of intracellular compartments. This Vanderwaltozyma polyspora (strain ATCC 22028 / DSM 70294 / BCRC 21397 / CBS 2163 / NBRC 10782 / NRRL Y-8283 / UCD 57-17) (Kluyveromyces polysporus) protein is V-type proton ATPase subunit F (VMA7).